Reading from the N-terminus, the 355-residue chain is Chemerin-like receptor 2 (355 aa).

At M1–S41 the chain is on the extracellular side. N14 is a glycosylation site (N-linked (GlcNAc...) asparagine). The chain crosses the membrane as a helical span at residues L42–F62. Residues T63–T73 are Cytoplasmic-facing. A helical transmembrane segment spans residues L74–I94. The Extracellular segment spans residues S95–A112. A disulfide bridge connects residues C110 and C187. The helical transmembrane segment at N113–L133 threads the bilayer. The Cytoplasmic portion of the chain corresponds to D134–S154. The helical transmembrane segment at L155 to F175 threads the bilayer. The Extracellular segment spans residues R176–K210. A helical membrane pass occupies residues F211–F231. At K232–T247 the chain is on the cytoplasmic side. A helical transmembrane segment spans residues I248–W268. Topologically, residues E269–I286 are extracellular. The helical transmembrane segment at P287–I307 threads the bilayer. Residues S308 to Q355 are Cytoplasmic-facing.

The protein belongs to the chemokine-like receptor (CMKLR) family.

Its subcellular location is the cell membrane. Its function is as follows. Receptor for chemoattractant adipokine chemerin/RARRES2 suggesting a role for this receptor in the regulation of inflammation and energy homesotasis. Signals mainly via beta-arrestin pathway. Binding of RARRES2 activates weakly G proteins, calcium mobilization and MAPK1/MAPK3 (ERK1/2) phosphorylation too. Acts also as a receptor for TAFA1, mediates its effects on neuronal stem-cell proliferation and differentiation via the activation of ROCK/ERK and ROCK/STAT3 signaling pathway. The chain is Chemerin-like receptor 2 (CMKLR2) from Macaca mulatta (Rhesus macaque).